Consider the following 1433-residue polypeptide: DNA-directed RNA polymerase subunit beta' (1433 aa).

Positions 66, 68, 81, and 84 each coordinate Zn(2+). The Mg(2+) site is built by aspartate 474, aspartate 476, and aspartate 478. The Zn(2+) site is built by cysteine 823, cysteine 897, cysteine 904, and cysteine 907.

The protein belongs to the RNA polymerase beta' chain family. In terms of assembly, the RNAP catalytic core consists of 2 alpha, 1 beta, 1 beta' and 1 omega subunit. When a sigma factor is associated with the core the holoenzyme is formed, which can initiate transcription. It depends on Mg(2+) as a cofactor. Zn(2+) serves as cofactor.

It carries out the reaction RNA(n) + a ribonucleoside 5'-triphosphate = RNA(n+1) + diphosphate. DNA-dependent RNA polymerase catalyzes the transcription of DNA into RNA using the four ribonucleoside triphosphates as substrates. This chain is DNA-directed RNA polymerase subunit beta', found in Amoebophilus asiaticus (strain 5a2).